Here is a 301-residue protein sequence, read N- to C-terminus: Inactive C-alpha-formylglycine-generating enzyme 2 (301 aa).

The N-terminal stretch at 1–25 is a signal peptide; it reads MGISLSPLLTVLSLLSGRWLELGNG. Cysteine 156 and cysteine 290 form a disulfide bridge. Asparagine 191 is a glycosylation site (N-linked (GlcNAc...) asparagine). Positions 194, 195, 208, 210, 229, 232, 234, and 236 each coordinate Ca(2+). Positions 274–284 are enriched in polar residues; the sequence is RMGNTPDSASD. The tract at residues 274–301 is disordered; sequence RMGNTPDSASDNLGFRCASGAGRPPGEL. The short motif at 298 to 301 is the Non-canonical ER retention motif element; that stretch reads PGEL.

The protein belongs to the sulfatase-modifying factor family. As to quaternary structure, homodimer and heterodimer with SUMF1.

The protein localises to the endoplasmic reticulum lumen. In terms of biological role, lacks formylglycine generating activity and is unable to convert newly synthesized inactive sulfatases to their active form. Inhibits the activation of sulfatases by SUMF1. This is Inactive C-alpha-formylglycine-generating enzyme 2 from Bos taurus (Bovine).